The primary structure comprises 341 residues: GTP-binding protein REM 2 (341 aa).

The segment covering 1–13 (MHTDLDTDMDMDT) has biased composition (acidic residues). Disordered stretches follow at residues 1–71 (MHTD…GSMP) and 84–106 (VDEL…GSGE). The segment covering 18–30 (LCSSSSRQASPLG) has biased composition (polar residues). Serine 27 carries the phosphoserine modification. The segment covering 90-106 (PPQASPSGSSDSLGSGE) has biased composition (low complexity). GTP-binding positions include 122–129 (GESGVGKS), 230–233 (NKSD), and 261–262 (AA). The disordered stretch occupies residues 282-309 (RGRGHAGGQRPEPSSPDGPAPPTRRESL). Over residues 294-303 (PSSPDGPAPP) the composition is skewed to pro residues. Serine 296 is subject to Phosphoserine.

It belongs to the small GTPase superfamily. RGK family.

The protein localises to the cell membrane. Functionally, binds GTP saturably and exhibits a low intrinsic rate of GTP hydrolysis. This Mus musculus (Mouse) protein is GTP-binding protein REM 2 (Rem2).